The sequence spans 335 residues: Ketol-acid reductoisomerase (NADP(+)) 2 (335 aa).

Residues methionine 1–threonine 180 enclose the KARI N-terminal Rossmann domain. Residues tyrosine 24–glutamine 27, arginine 47, serine 51, and aspartate 81–glutamine 84 each bind NADP(+). Residue histidine 106 is part of the active site. Residue glycine 132 coordinates NADP(+). The 146-residue stretch at threonine 181 to isoleucine 326 folds into the KARI C-terminal knotted domain. Residues aspartate 189, glutamate 193, glutamate 225, and glutamate 229 each coordinate Mg(2+). Serine 250 serves as a coordination point for substrate.

Belongs to the ketol-acid reductoisomerase family. The cofactor is Mg(2+).

The catalysed reaction is (2R)-2,3-dihydroxy-3-methylbutanoate + NADP(+) = (2S)-2-acetolactate + NADPH + H(+). It catalyses the reaction (2R,3R)-2,3-dihydroxy-3-methylpentanoate + NADP(+) = (S)-2-ethyl-2-hydroxy-3-oxobutanoate + NADPH + H(+). The protein operates within amino-acid biosynthesis; L-isoleucine biosynthesis; L-isoleucine from 2-oxobutanoate: step 2/4. It participates in amino-acid biosynthesis; L-valine biosynthesis; L-valine from pyruvate: step 2/4. Functionally, involved in the biosynthesis of branched-chain amino acids (BCAA). Catalyzes an alkyl-migration followed by a ketol-acid reduction of (S)-2-acetolactate (S2AL) to yield (R)-2,3-dihydroxy-isovalerate. In the isomerase reaction, S2AL is rearranged via a Mg-dependent methyl migration to produce 3-hydroxy-3-methyl-2-ketobutyrate (HMKB). In the reductase reaction, this 2-ketoacid undergoes a metal-dependent reduction by NADPH to yield (R)-2,3-dihydroxy-isovalerate. This chain is Ketol-acid reductoisomerase (NADP(+)) 2, found in Bacillus anthracis.